A 612-amino-acid polypeptide reads, in one-letter code: DNA mismatch repair protein MutL (612 aa).

Belongs to the DNA mismatch repair MutL/HexB family.

In terms of biological role, this protein is involved in the repair of mismatches in DNA. It is required for dam-dependent methyl-directed DNA mismatch repair. May act as a 'molecular matchmaker', a protein that promotes the formation of a stable complex between two or more DNA-binding proteins in an ATP-dependent manner without itself being part of a final effector complex. The sequence is that of DNA mismatch repair protein MutL from Bartonella quintana (strain Toulouse) (Rochalimaea quintana).